The primary structure comprises 309 residues: UPF0276 protein RB0508 (309 aa).

It belongs to the UPF0276 family.

The polypeptide is UPF0276 protein RB0508 (Rhizobium meliloti (strain 1021) (Ensifer meliloti)).